Reading from the N-terminus, the 585-residue chain is Arginine--tRNA ligase (585 aa).

The 'HIGH' region motif lies at 130–140 (ANPTGPMHVGH).

It belongs to the class-I aminoacyl-tRNA synthetase family. In terms of assembly, monomer.

Its subcellular location is the cytoplasm. It carries out the reaction tRNA(Arg) + L-arginine + ATP = L-arginyl-tRNA(Arg) + AMP + diphosphate. The protein is Arginine--tRNA ligase of Methylorubrum extorquens (strain CM4 / NCIMB 13688) (Methylobacterium extorquens).